The primary structure comprises 564 residues: Urocanate hydratase (564 aa).

NAD(+) is bound by residues 58–59 (GG), Gln136, 182–184 (GMG), Glu202, Arg207, 248–249 (NA), 269–273 (QTSAH), 279–280 (YL), and Tyr328. Cys416 is a catalytic residue. Gly498 lines the NAD(+) pocket.

This sequence belongs to the urocanase family. It depends on NAD(+) as a cofactor.

It is found in the cytoplasm. The enzyme catalyses 4-imidazolone-5-propanoate = trans-urocanate + H2O. Its pathway is amino-acid degradation; L-histidine degradation into L-glutamate; N-formimidoyl-L-glutamate from L-histidine: step 2/3. Functionally, catalyzes the conversion of urocanate to 4-imidazolone-5-propionate. This is Urocanate hydratase from Aliivibrio salmonicida (strain LFI1238) (Vibrio salmonicida (strain LFI1238)).